The sequence spans 31 residues: Cytochrome b6-f complex subunit 6 (31 aa).

A helical transmembrane segment spans residues Ile-4–Ser-26.

Belongs to the PetL family. In terms of assembly, the 4 large subunits of the cytochrome b6-f complex are cytochrome b6, subunit IV (17 kDa polypeptide, PetD), cytochrome f and the Rieske protein, while the 4 small subunits are PetG, PetL, PetM and PetN. The complex functions as a dimer.

It localises to the plastid. It is found in the chloroplast thylakoid membrane. Component of the cytochrome b6-f complex, which mediates electron transfer between photosystem II (PSII) and photosystem I (PSI), cyclic electron flow around PSI, and state transitions. PetL is important for photoautotrophic growth as well as for electron transfer efficiency and stability of the cytochrome b6-f complex. This is Cytochrome b6-f complex subunit 6 from Liriodendron tulipifera (Tuliptree).